Consider the following 3608-residue polypeptide: Serine-rich adhesin for platelets (3608 aa).

Residues 1 to 91 form the signal peptide; that stretch reads MSRKERNFKR…FAMLNDHHAY (91 aa). Positions 92 to 302 are serine-rich repeat region 1, SRR1; it reads AASETPMTSE…DSTSTSTSTA (211 aa). Disordered regions lie at residues 105 to 280, 495 to 3575, and 3588 to 3608; these read NSET…SESQ, DPTS…SNST, and LGLFGKSRKNKKDKKNKGSEQ. Positions 114–201 are enriched in low complexity; the sequence is STTVTKSETS…DNSTSNNSTT (88 aa). The segment covering 209–220 has biased composition (polar residues); that stretch reads QANTTSTDSQKG. Low complexity-rich tracts occupy residues 221 to 234, 244 to 280, and 497 to 3545; these read STSTNDNSITSTST, TESNSITASNSTSDSNSGSTVSTNSTTSQLTSTSESQ, and TSTA…ESQS. The tract at residues 303–755 is non-repeat region (NRR); the sequence is PLKLRTFSRL…STSLSGSESA (453 aa). The tract at residues 756–3567 is serine-rich repeat region 2, SRR2; the sequence is SLSDSASAST…HDAKDELPDT (2812 aa). Positions 3564-3568 match the LPXTG sorting signal motif; that stretch reads LPDTG. Residue threonine 3567 is modified to Pentaglycyl murein peptidoglycan amidated threonine. A propeptide spans 3568–3608 (removed by sortase); sequence GDSDSNSTGLVSAVAAMLAGLGLFGKSRKNKKDKKNKGSEQ. Residues 3593-3602 are compositionally biased toward basic residues; sequence KSRKNKKDKK.

Belongs to the serine-rich repeat protein (SRRP) family. Post-translationally, proteolytically cleaved by a metalloprotease. Glycosylated. It is probable that most of the Ser residues in SSR1 and SSR2 are O-GlcNAcylated. Sequential glycosylation by sugar transferases are able to generate complex sugar polymorphisms.

The protein localises to the secreted. It is found in the cell wall. Functionally, mediates binding to human platelets, possibly through a receptor-ligand interaction. The chain is Serine-rich adhesin for platelets (sraP) from Staphylococcus haemolyticus (strain JCSC1435).